The sequence spans 187 residues: GTPase KRas (187 aa).

GTP-binding positions include glycine 10 to alanine 18, valine 29 to threonine 35, alanine 59 to glycine 60, and asparagine 116 to alanine 119. An Effector region motif is present at residues tyrosine 32–tyrosine 40. The interval glutamate 168–leucine 187 is disordered. Position 184 is a cysteine methyl ester (cysteine 184). Cysteine 184 carries the S-farnesyl cysteine lipid modification. A propeptide spans serine 185–leucine 187 (removed in mature form).

Belongs to the small GTPase superfamily. Ras family.

It localises to the cell membrane. It is found in the cytoplasm. The catalysed reaction is GTP + H2O = GDP + phosphate + H(+). Its activity is regulated as follows. Alternates between an inactive form bound to GDP and an active form bound to GTP. Activated by a guanine nucleotide-exchange factor (GEF) and inactivated by a GTPase-activating protein (GAP). Functionally, ras proteins bind GDP/GTP and possess intrinsic GTPase activity. Plays an important role in the regulation of cell proliferation. In Xenopus laevis (African clawed frog), this protein is GTPase KRas (kras).